A 47-amino-acid chain; its full sequence is NADH dehydrogenase [ubiquinone] iron-sulfur protein 2 (47 aa).

Belongs to the complex I 49 kDa subunit family. As to quaternary structure, complex I is composed of about 45 different subunits. This is a component of the iron-sulfur (IP) fragment of the enzyme.

Its subcellular location is the mitochondrion inner membrane. It catalyses the reaction a ubiquinone + NADH + 5 H(+)(in) = a ubiquinol + NAD(+) + 4 H(+)(out). Its function is as follows. Core subunit of the mitochondrial membrane respiratory chain NADH dehydrogenase (Complex I) that is believed to belong to the minimal assembly required for catalysis. Complex I functions in the transfer of electrons from NADH to the respiratory chain. The immediate electron acceptor for the enzyme is believed to be ubiquinone. Component of the iron-sulfur (IP) fragment of the enzyme. In Solanum tuberosum (Potato), this protein is NADH dehydrogenase [ubiquinone] iron-sulfur protein 2 (NAD7).